A 242-amino-acid chain; its full sequence is MSDEFSLADALPEQSSAKPPAVTNTKAGHSSQGWPGSSPWSNPSAPPAMPSGLPPSSAAPSTVPFGPVPTGMYPSMPPTGPPPGPPGPFPPPGPSCPPPGVPYPAPAVPGPGPTGPYATPNMPMPELPRPYGAPTDPAAAGSLGPWGPMSSGPWAPGIAGQHPNMPYRSPGPYPTVPPPVSGAPPVPWGTVPPGAWGPAAPYPGPAGSYPTPAPHPALNNPYQVPSGPAGAPPMPGGPHSYH.

Disordered stretches follow at residues methionine 1–proline 145 and proline 192–histidine 242. Serine 2 carries the post-translational modification N-acetylserine. Phosphoserine occurs at positions 2, 6, and 15. Positions glutamate 13–histidine 29 are enriched in polar residues. The span at serine 30 to proline 43 shows a compositional bias: low complexity. Pro residues-rich tracts occupy residues serine 44 to leucine 53 and serine 75 to threonine 114. The segment covering proline 192–proline 210 has biased composition (low complexity).

Belongs to the MISS family.

This is MAPK-interacting and spindle-stabilizing protein-like (Mapk1ip1l) from Mus musculus (Mouse).